Here is a 108-residue protein sequence, read N- to C-terminus: Sperm-egg fusion protein LLCFC1 (108 aa).

The first 30 residues, 1–30 (MTSLGSQLHRATFLTALLLLLLLQVKGVKT), serve as a signal peptide directing secretion. Residues 39-49 (GDKSQKDKVSS) are compositionally biased toward basic and acidic residues. Residues 39–64 (GDKSQKDKVSSEDQGEEEYEEHFEAS) are disordered.

In terms of tissue distribution, detected in testicular germ cells and spermatozoa (at protein level). Abundantly expressed in testis.

The protein localises to the secreted. Functionally, sperm protein required for fusion of sperm with the egg membrane during fertilization. This Mus musculus (Mouse) protein is Sperm-egg fusion protein LLCFC1.